A 404-amino-acid polypeptide reads, in one-letter code: Tripartite motif-containing 13 (404 aa).

The segment at 10 to 56 adopts an RING-type zinc-finger fold; the sequence is CPICCCLFEDPRVLPCSHSFCKKCLEGILDGNRSPTWRPPFKCPTCR. A B box-type zinc finger spans residues 87 to 129; the sequence is PRMSQCRVHSGQPLNIFCATDLKLICGFCATTGDHKGHKFCAL. Zn(2+) contacts are provided by Cys92, His95, Cys115, and His121. A helical membrane pass occupies residues 102–119; that stretch reads IFCATDLKLICGFCATTG. Positions 186–236 form a coiled coil; that stretch reads KLLRTLEHKRSEILSDLETLKLAVMQTFDPEINRLRSALEEQRRALNIAES.

It localises to the endoplasmic reticulum membrane. Its pathway is protein modification; protein ubiquitination. Functionally, E3 ubiquitin ligase involved in the retrotranslocation and turnover of membrane and secretory proteins from the ER through a set of processes named ER-associated degradation (ERAD). This process acts on misfolded proteins as well as in the regulated degradation of correctly folded proteins. The polypeptide is Tripartite motif-containing 13 (trim13) (Danio rerio (Zebrafish)).